The following is a 366-amino-acid chain: tRNA pseudouridine synthase B (366 aa).

Residues 1–55 (MTVTTPDALLAPHDVQHAGADESAAQIRKPRDNNDPRNANRGGGNGKPRRDKRDV) form a disordered region. Asp-92 serves as the catalytic Nucleophile.

Belongs to the pseudouridine synthase TruB family. Type 1 subfamily.

It catalyses the reaction uridine(55) in tRNA = pseudouridine(55) in tRNA. Its function is as follows. Responsible for synthesis of pseudouridine from uracil-55 in the psi GC loop of transfer RNAs. This Rhodopseudomonas palustris (strain ATCC BAA-98 / CGA009) protein is tRNA pseudouridine synthase B.